A 163-amino-acid polypeptide reads, in one-letter code: Probable metallophosphoesterase MG207 (163 aa).

The Mn(2+) site is built by D9, H11, D34, N53, H75, H107, and H109.

The protein belongs to the metallophosphoesterase superfamily. YfcE family. Mn(2+) serves as cofactor.

This chain is Probable metallophosphoesterase MG207, found in Mycoplasma genitalium (strain ATCC 33530 / DSM 19775 / NCTC 10195 / G37) (Mycoplasmoides genitalium).